The following is a 251-amino-acid chain: uncharacterized protein (251 aa).

This is an uncharacterized protein from Methanothermus fervidus.